A 230-amino-acid chain; its full sequence is Probable C4-dicarboxylate response regulator DctR (230 aa).

In terms of domain architecture, Response regulatory spans 8-124 (RVLLIEDDPM…RLKAALTQYE (117 aa)). The residue at position 59 (aspartate 59) is a 4-aspartylphosphate. The H-T-H motif DNA-binding region spans 183–209 (EEIGRDVGLARVTVRRYLNYLESVGQV).

Post-translationally, phosphorylated by DctS.

It localises to the cytoplasm. In terms of biological role, member of the two-component regulatory system DctS/DctR. Essential for expression of DctP. The chain is Probable C4-dicarboxylate response regulator DctR (dctR) from Halalkalibacterium halodurans (strain ATCC BAA-125 / DSM 18197 / FERM 7344 / JCM 9153 / C-125) (Bacillus halodurans).